The primary structure comprises 155 residues: SsrA-binding protein (155 aa).

The protein belongs to the SmpB family.

The protein localises to the cytoplasm. In terms of biological role, required for rescue of stalled ribosomes mediated by trans-translation. Binds to transfer-messenger RNA (tmRNA), required for stable association of tmRNA with ribosomes. tmRNA and SmpB together mimic tRNA shape, replacing the anticodon stem-loop with SmpB. tmRNA is encoded by the ssrA gene; the 2 termini fold to resemble tRNA(Ala) and it encodes a 'tag peptide', a short internal open reading frame. During trans-translation Ala-aminoacylated tmRNA acts like a tRNA, entering the A-site of stalled ribosomes, displacing the stalled mRNA. The ribosome then switches to translate the ORF on the tmRNA; the nascent peptide is terminated with the 'tag peptide' encoded by the tmRNA and targeted for degradation. The ribosome is freed to recommence translation, which seems to be the essential function of trans-translation. The polypeptide is SsrA-binding protein (Streptococcus pneumoniae (strain P1031)).